The primary structure comprises 429 residues: Bifunctional protein GlmU (429 aa).

The tract at residues M1–K223 is pyrophosphorylase. Residues L8–G11, K22, and G81–T82 contribute to the UDP-N-acetyl-alpha-D-glucosamine site. D102 provides a ligand contact to Mg(2+). UDP-N-acetyl-alpha-D-glucosamine contacts are provided by G135, E149, N164, and N221. N221 contributes to the Mg(2+) binding site. Positions F224 to Q244 are linker. The interval G245–K429 is N-acetyltransferase. 2 residues coordinate UDP-N-acetyl-alpha-D-glucosamine: R308 and K325. Catalysis depends on H336, which acts as the Proton acceptor. Positions 339 and 350 each coordinate UDP-N-acetyl-alpha-D-glucosamine. Acetyl-CoA is bound by residues N359–Y360, S378, A396, and R413.

It in the N-terminal section; belongs to the N-acetylglucosamine-1-phosphate uridyltransferase family. This sequence in the C-terminal section; belongs to the transferase hexapeptide repeat family. In terms of assembly, homotrimer. Requires Mg(2+) as cofactor.

The protein resides in the cytoplasm. The enzyme catalyses alpha-D-glucosamine 1-phosphate + acetyl-CoA = N-acetyl-alpha-D-glucosamine 1-phosphate + CoA + H(+). It catalyses the reaction N-acetyl-alpha-D-glucosamine 1-phosphate + UTP + H(+) = UDP-N-acetyl-alpha-D-glucosamine + diphosphate. It functions in the pathway nucleotide-sugar biosynthesis; UDP-N-acetyl-alpha-D-glucosamine biosynthesis; N-acetyl-alpha-D-glucosamine 1-phosphate from alpha-D-glucosamine 6-phosphate (route II): step 2/2. Its pathway is nucleotide-sugar biosynthesis; UDP-N-acetyl-alpha-D-glucosamine biosynthesis; UDP-N-acetyl-alpha-D-glucosamine from N-acetyl-alpha-D-glucosamine 1-phosphate: step 1/1. It participates in bacterial outer membrane biogenesis; LPS lipid A biosynthesis. Functionally, catalyzes the last two sequential reactions in the de novo biosynthetic pathway for UDP-N-acetylglucosamine (UDP-GlcNAc). The C-terminal domain catalyzes the transfer of acetyl group from acetyl coenzyme A to glucosamine-1-phosphate (GlcN-1-P) to produce N-acetylglucosamine-1-phosphate (GlcNAc-1-P), which is converted into UDP-GlcNAc by the transfer of uridine 5-monophosphate (from uridine 5-triphosphate), a reaction catalyzed by the N-terminal domain. In Campylobacter jejuni (strain RM1221), this protein is Bifunctional protein GlmU.